The following is a 101-amino-acid chain: Small ribosomal subunit protein uS14 (101 aa).

Belongs to the universal ribosomal protein uS14 family. In terms of assembly, part of the 30S ribosomal subunit. Contacts proteins S3 and S10.

Binds 16S rRNA, required for the assembly of 30S particles and may also be responsible for determining the conformation of the 16S rRNA at the A site. The sequence is that of Small ribosomal subunit protein uS14 from Ruegeria sp. (strain TM1040) (Silicibacter sp.).